A 431-amino-acid polypeptide reads, in one-letter code: Adenylosuccinate synthetase (431 aa).

GTP contacts are provided by residues 13 to 19 and 41 to 43; these read GDEGKGK and GHT. Asp14 functions as the Proton acceptor in the catalytic mechanism. Positions 14 and 41 each coordinate Mg(2+). IMP is bound by residues 14-17, 39-42, Thr130, Arg144, Gln225, Thr240, and Arg304; these read DEGK and NAGH. The Proton donor role is filled by His42. Residue 300 to 306 participates in substrate binding; the sequence is ATTGRAR. Residues Arg306, 332 to 334, and 415 to 417 contribute to the GTP site; these read KLD and STG.

The protein belongs to the adenylosuccinate synthetase family. As to quaternary structure, homodimer. The cofactor is Mg(2+).

It is found in the cytoplasm. It carries out the reaction IMP + L-aspartate + GTP = N(6)-(1,2-dicarboxyethyl)-AMP + GDP + phosphate + 2 H(+). The protein operates within purine metabolism; AMP biosynthesis via de novo pathway; AMP from IMP: step 1/2. Its function is as follows. Plays an important role in the de novo pathway of purine nucleotide biosynthesis. Catalyzes the first committed step in the biosynthesis of AMP from IMP. The polypeptide is Adenylosuccinate synthetase (Ectopseudomonas mendocina (strain ymp) (Pseudomonas mendocina)).